Reading from the N-terminus, the 287-residue chain is Nucleoside kinase (287 aa).

Residues aspartate 13, asparagine 28, glycine 38, and asparagine 42 each contribute to the substrate site. Glutamine 102 contacts ATP. 2 residues coordinate substrate: serine 104 and glutamine 150. Residues asparagine 173 and 196-201 each bind ATP; that span reads TNGERG. Aspartate 227 contacts substrate. Aspartate 227 serves as the catalytic Proton acceptor.

It belongs to the carbohydrate kinase PfkB family. As to quaternary structure, homodimer. It depends on Mg(2+) as a cofactor. Co(2+) is required as a cofactor.

The catalysed reaction is adenosine + ATP = AMP + ADP + H(+). The enzyme catalyses cytidine + ATP = CMP + ADP + H(+). It catalyses the reaction guanosine + ATP = GMP + ADP + H(+). It carries out the reaction inosine + ATP = IMP + ADP + H(+). In terms of biological role, nucleoside kinase with broad substrate specificity. Catalyzes the phosphorylation of a variety of nucleosides to the corresponding nucleoside 5'-mono-phosphate in the presence of phosphate donors and divalent cations. Displays the most efficient activity with guanosine, followed by inosine, cytidine, and adenosine. Negligible enzymatic activity is detected with thymidine, uridine, and 2-deoxyadenosine. ATP is the most efficient phosphate donor, but can also use GTP and ITP. Shows no sugar kinase activity, since it is unable to phosphorylate ribose, fructose-1-phosphate, or fructose-6-phosphate. This Thermoplasma acidophilum (strain ATCC 25905 / DSM 1728 / JCM 9062 / NBRC 15155 / AMRC-C165) protein is Nucleoside kinase.